A 186-amino-acid chain; its full sequence is ATP synthase subunit delta (186 aa).

It belongs to the ATPase delta chain family. F-type ATPases have 2 components, F(1) - the catalytic core - and F(0) - the membrane proton channel. F(1) has five subunits: alpha(3), beta(3), gamma(1), delta(1), epsilon(1). F(0) has three main subunits: a(1), b(2) and c(10-14). The alpha and beta chains form an alternating ring which encloses part of the gamma chain. F(1) is attached to F(0) by a central stalk formed by the gamma and epsilon chains, while a peripheral stalk is formed by the delta and b chains.

It localises to the cell membrane. Functionally, f(1)F(0) ATP synthase produces ATP from ADP in the presence of a proton or sodium gradient. F-type ATPases consist of two structural domains, F(1) containing the extramembraneous catalytic core and F(0) containing the membrane proton channel, linked together by a central stalk and a peripheral stalk. During catalysis, ATP synthesis in the catalytic domain of F(1) is coupled via a rotary mechanism of the central stalk subunits to proton translocation. This protein is part of the stalk that links CF(0) to CF(1). It either transmits conformational changes from CF(0) to CF(1) or is implicated in proton conduction. This is ATP synthase subunit delta from Mycoplasmopsis agalactiae (strain NCTC 10123 / CIP 59.7 / PG2) (Mycoplasma agalactiae).